The sequence spans 441 residues: Cytochrome c biogenesis protein Ccs1 (441 aa).

Helical transmembrane passes span leucine 19–isoleucine 39, threonine 78–alanine 98, and isoleucine 164–asparagine 184.

Belongs to the Ccs1/CcsB family. As to quaternary structure, may interact with CcsA.

The protein resides in the plastid. The protein localises to the chloroplast thylakoid membrane. Required during biogenesis of c-type cytochromes (cytochrome c6 and cytochrome f) at the step of heme attachment. In Rhodomonas salina (Cryptomonas salina), this protein is Cytochrome c biogenesis protein Ccs1.